Here is a 1275-residue protein sequence, read N- to C-terminus: Serine/threonine-protein kinase ULK4 (1275 aa).

Positions Phe-4–Trp-280 constitute a Protein kinase domain. Disordered regions lie at residues Ser-299 to Leu-350 and Arg-364 to Leu-392. A compositionally biased stretch (basic and acidic residues) spans Phe-336–Ser-348. A compositionally biased stretch (polar residues) spans Arg-364–Val-373. HEAT repeat units lie at residues Leu-842–His-880, Ser-926–Asn-964, Leu-1025–Ala-1063, Asn-1151–Gly-1189, and Pro-1213–Gly-1253.

It belongs to the protein kinase superfamily. Ser/Thr protein kinase family. APG1/unc-51/ULK1 subfamily. Expressed in the brain, mainly in postmitotic neurons, including GABAergic neurons, but not in astrocytes (at protein level).

The enzyme catalyses L-seryl-[protein] + ATP = O-phospho-L-seryl-[protein] + ADP + H(+). It catalyses the reaction L-threonyl-[protein] + ATP = O-phospho-L-threonyl-[protein] + ADP + H(+). In terms of biological role, may be involved in the remodeling of cytoskeletal components, such as alpha-tubulin, and in this way regulates neurite branching and elongation, as well as cell motility. This Homo sapiens (Human) protein is Serine/threonine-protein kinase ULK4 (ULK4).